A 228-amino-acid polypeptide reads, in one-letter code: Sugar fermentation stimulation protein homolog (228 aa).

Belongs to the SfsA family.

The chain is Sugar fermentation stimulation protein homolog from Psychromonas ingrahamii (strain DSM 17664 / CCUG 51855 / 37).